Reading from the N-terminus, the 132-residue chain is L-ectoine synthase (132 aa).

This sequence belongs to the ectoine synthase family.

It carries out the reaction (2S)-4-acetamido-2-aminobutanoate = L-ectoine + H2O. It participates in amine and polyamine biosynthesis; ectoine biosynthesis; L-ectoine from L-aspartate 4-semialdehyde: step 3/3. Functionally, catalyzes the circularization of gamma-N-acetyl-alpha,gamma-diaminobutyric acid (ADABA) to ectoine (1,4,5,6-tetrahydro-2-methyl-4-pyrimidine carboxylic acid), which is an excellent osmoprotectant. This chain is L-ectoine synthase, found in Bordetella avium (strain 197N).